The sequence spans 207 residues: LexA repressor (207 aa).

The segment at residues 28 to 48 (VREIGEAVGLASSSTVHGHLS) is a DNA-binding region (H-T-H motif). Active-site for autocatalytic cleavage activity residues include S130 and K168.

Belongs to the peptidase S24 family. As to quaternary structure, homodimer.

It carries out the reaction Hydrolysis of Ala-|-Gly bond in repressor LexA.. Its function is as follows. Represses a number of genes involved in the response to DNA damage (SOS response), including recA and lexA. In the presence of single-stranded DNA, RecA interacts with LexA causing an autocatalytic cleavage which disrupts the DNA-binding part of LexA, leading to derepression of the SOS regulon and eventually DNA repair. The protein is LexA repressor of Staphylococcus aureus (strain Mu3 / ATCC 700698).